A 445-amino-acid chain; its full sequence is Argininosuccinate synthase (445 aa).

ATP-binding positions include 17–25 (AFSGGLDTS) and Ala43. Tyr99 serves as a coordination point for L-citrulline. ATP contacts are provided by Gly129 and Thr131. The L-aspartate site is built by Thr131, Asn135, and Asp136. Asn135 contacts L-citrulline. Asp136 provides a ligand contact to ATP. L-citrulline is bound by residues Arg139 and Ser192. Asp194 is a binding site for ATP. L-citrulline is bound by residues Thr201, Glu203, and Glu280.

Belongs to the argininosuccinate synthase family. Type 2 subfamily. As to quaternary structure, homotetramer.

It is found in the cytoplasm. It carries out the reaction L-citrulline + L-aspartate + ATP = 2-(N(omega)-L-arginino)succinate + AMP + diphosphate + H(+). It participates in amino-acid biosynthesis; L-arginine biosynthesis; L-arginine from L-ornithine and carbamoyl phosphate: step 2/3. The sequence is that of Argininosuccinate synthase from Polaromonas naphthalenivorans (strain CJ2).